Consider the following 470-residue polypeptide: ATP synthase subunit beta (470 aa).

148-155 (GGAGVGKT) lines the ATP pocket.

This sequence belongs to the ATPase alpha/beta chains family. As to quaternary structure, F-type ATPases have 2 components, CF(1) - the catalytic core - and CF(0) - the membrane proton channel. CF(1) has five subunits: alpha(3), beta(3), gamma(1), delta(1), epsilon(1). CF(0) has three main subunits: a(1), b(2) and c(9-12). The alpha and beta chains form an alternating ring which encloses part of the gamma chain. CF(1) is attached to CF(0) by a central stalk formed by the gamma and epsilon chains, while a peripheral stalk is formed by the delta and b chains.

It is found in the cell inner membrane. It carries out the reaction ATP + H2O + 4 H(+)(in) = ADP + phosphate + 5 H(+)(out). Functionally, produces ATP from ADP in the presence of a proton gradient across the membrane. The catalytic sites are hosted primarily by the beta subunits. This is ATP synthase subunit beta from Saccharophagus degradans (strain 2-40 / ATCC 43961 / DSM 17024).